The chain runs to 763 residues: Glycerophosphodiester phosphodiesterase GDPDL1 (763 aa).

A signal peptide spans 1-35; it reads MNSRPSNPTKLVIRSSTLLFCGVVLIHLFAAQIDA. The Extracellular segment spans residues 36-744; the sequence is QRSTSRWQTL…STIAQAPSGQ (709 aa). The 301-residue stretch at 50–350 folds into the GP-PDE 1 domain; it reads PLVIARGGFS…DFPITASAAV (301 aa). N-linked (GlcNAc...) asparagine glycosylation is found at N105, N192, N248, N257, N315, N359, N430, N534, N547, and N654. Residues 366-668 enclose the GP-PDE 2 domain; that stretch reads FLVISKDGAS…EFPFTAARYK (303 aa). Residues 745–762 traverse the membrane as a helical segment; the sequence is TRLKLSLLLSVFFLSLLL. Residue L763 is a topological domain, cytoplasmic.

It belongs to the glycerophosphoryl diester phosphodiesterase family. Ca(2+) is required as a cofactor. As to expression, expressed in rosette and cauline leaves, stems, flowers and siliques.

It localises to the cell membrane. It carries out the reaction a sn-glycero-3-phosphodiester + H2O = an alcohol + sn-glycerol 3-phosphate + H(+). Functionally, hydrolyzes glycerolphosphoglycerol, glycerophosphocholine and glycerophosphoethanolamine in vitro. The protein is Glycerophosphodiester phosphodiesterase GDPDL1 of Arabidopsis thaliana (Mouse-ear cress).